The sequence spans 164 residues: Dynein regulatory complex protein 8 (164 aa).

EF-hand domains lie at 16–51 (ELHKKIKDAFEVFDHESNNTVDVREIGTIIRSLGCC) and 94–129 (AAEDILLRAFEVLDPAKRGFLTKDELVKYMTEEGEP).

Belongs to the DRC8 family. As to quaternary structure, component of the nexin-dynein regulatory complex (N-DRC).

It localises to the cytoplasm. It is found in the cytoskeleton. The protein resides in the flagellum axoneme. In terms of biological role, component of the nexin-dynein regulatory complex (N-DRC), a key regulator of ciliary/flagellar motility which maintains the alignment and integrity of the distal axoneme and regulates microtubule sliding in motile axonemes. This Mus musculus (Mouse) protein is Dynein regulatory complex protein 8 (Efcab2).